Here is a 196-residue protein sequence, read N- to C-terminus: Peptidoglycan recognition protein (196 aa).

A signal peptide spans 1-23 (MARLHSAVVLALALSSLLTEIAA). 2 disulfides stabilise this stretch: Cys25/Cys147 and Cys61/Cys67. Positions 46–173 (RPVSLVIVQH…RQLIASESPG (128 aa)) constitute an N-acetylmuramoyl-L-alanine amidase domain.

This sequence belongs to the N-acetylmuramoyl-L-alanine amidase 2 family. Monomer. As to expression, constitutively expressed in fat body, epithelial cells and hemocytes. Not detected in Malpighian tubules, silk gland or midgut.

Binds specifically to peptidoglycan and triggers the propenoloxidase cascade which is an important insect defense mechanism. This Bombyx mori (Silk moth) protein is Peptidoglycan recognition protein.